The primary structure comprises 278 residues: Beta-lactamase-like protein str5 (278 aa).

A helical transmembrane segment spans residues 20–37; that stretch reads VFVLAALLSATFAFFTHT. A glycan (N-linked (GlcNAc...) asparagine) is linked at Asn112.

Belongs to the beta-lactamase family.

The protein localises to the membrane. It functions in the pathway mycotoxin biosynthesis. Functionally, beta-lactamase-like protein; part of the gene cluster that mediates the biosynthesis of strobilurin A, an antifungal polyketide that contains a key beta-methoxyacrylate toxophore that targets the complex III of the mitochondrial electron transport chain. Strobilurin biosynthesis begins with construction of benzoyl CoA by step-wise elimination of ammonia from phenylalanine by the phenylalanine ammonia-lyase str11, oxygenation by str8 and retro-Claisen reaction to form benzoic acid, which is activated to its CoA thiolester benzoyl CoA by the dedicated CoA ligase str10. Benzoyl CoA forms the starter unit for the highly reducing polyketide synthase stpks1 that produces the polyketide prestrobilutin A. The FAD-dependent oxygenase str9 then catalyzes the key oxidative rearrangement responsible for the creation of the beta-methoxyacrylate toxophore. Str9 performs epoxidation of the 2,3 olefin of prestrobilutin A, followed by Meinwald rearrangement to furnish the aldehyde intermediate. Rapid enolization of the aldehyde intermediate would give the beta-methoxyacrylate skeleton and methylations catalyzed by str2 and str3 complete the synthesis and lead to the production of strobilurin A. The short-chain dehydrogenase stl2 and the dehydrogenase str4 play a role in the shunt pathway leading to the production of bolineol. The cluster encodes no obvious halogenase gene that could be involved in production of strobilurin B, nor any obvious dimethylallyl-transferase that could be involved in the production of strobilurin G. It is possible that unknown proteins encoded in, or near, the cluster (such as str1 or stl1) may form new classes of halogenases or dimethylally-transferases, or that the responsible genes are located elsewhere on the genome. Similarly, proteins encoded by str5/str6 hydrolases appear to have no chemical role in the biosynthesis of strobilurin A. Finally, no obvious self-resistance gene is found within the cluster. The polypeptide is Beta-lactamase-like protein str5 (Strobilurus tenacellus).